Here is a 227-residue protein sequence, read N- to C-terminus: Thymidine kinase (227 aa).

Residues 15–22 (GSMFSGKT) and 87–90 (DEAQ) contribute to the ATP site. E88 serves as the catalytic Proton acceptor. Positions 144, 147, 176, and 179 each coordinate Zn(2+). The disordered stretch occupies residues 198–227 (RAVATDDADASTNEADPEAADAASADGTAA). A compositionally biased stretch (low complexity) spans 217-227 (ADAASADGTAA).

This sequence belongs to the thymidine kinase family. In terms of assembly, homotetramer.

The protein localises to the cytoplasm. The enzyme catalyses thymidine + ATP = dTMP + ADP + H(+). The sequence is that of Thymidine kinase from Salinibacter ruber (strain DSM 13855 / M31).